A 527-amino-acid chain; its full sequence is Coproporphyrinogen III oxidase (527 aa).

Residues 1–14 show a composition bias toward low complexity; sequence MSTTDRVTTPTPTV. The tract at residues 1–23 is disordered; the sequence is MSTTDRVTTPTPTVSGTDAPGPD. Residues 33–38, 56–57, K64, and 78–81 each bind FAD; these read GGGITG, ES, and GPDS. The interval 231-267 is disordered; that stretch reads RRAARQRAAQNNAQQNSSHQNSTGQNNSAGTRGPAAS. Positions 236–252 are enriched in low complexity; it reads QRAAQNNAQQNSSHQNS. Residues V300, W448, and 487–489 each bind FAD; that span reads VGL.

It belongs to the protoporphyrinogen/coproporphyrinogen oxidase family. Coproporphyrinogen III oxidase subfamily. The cofactor is FAD.

The protein resides in the cytoplasm. The enzyme catalyses coproporphyrinogen III + 3 O2 = coproporphyrin III + 3 H2O2. The protein operates within porphyrin-containing compound metabolism; protoheme biosynthesis. Functionally, involved in coproporphyrin-dependent heme b biosynthesis. Catalyzes the oxidation of coproporphyrinogen III to coproporphyrin III. The sequence is that of Coproporphyrinogen III oxidase from Propionibacterium freudenreichii subsp. freudenreichii.